A 94-amino-acid chain; its full sequence is Non-specific lipid-transfer protein C4 (94 aa).

The signal sequence occupies residues 1-26; that stretch reads MAASKGNAAAAACALVLVLLAVGAEA. Disulfide bonds link Cys34/Cys72, Cys44/Cys59, Cys60/Cys85, and Cys70/Cys92. Asn91 carries an N-linked (GlcNAc...) asparagine glycan.

It belongs to the plant LTP family.

In terms of biological role, lipid-transfer protein that may be regulated by the transcription factor UDT1 in developing anthers and play a role in tapetum development. The protein is Non-specific lipid-transfer protein C4 of Oryza sativa subsp. japonica (Rice).